A 516-amino-acid chain; its full sequence is Maturase K (516 aa).

This sequence belongs to the intron maturase 2 family. MatK subfamily.

It localises to the plastid. Its subcellular location is the chloroplast. Usually encoded in the trnK tRNA gene intron. Probably assists in splicing its own and other chloroplast group II introns. This is Maturase K from Cypripedium calceolus (Yellow lady's slipper).